Reading from the N-terminus, the 402-residue chain is Nicotinate phosphoribosyltransferase (402 aa).

A Phosphohistidine; by autocatalysis modification is found at H224.

It belongs to the NAPRTase family. In terms of processing, transiently phosphorylated on a His residue during the reaction cycle. Phosphorylation strongly increases the affinity for substrates and increases the rate of nicotinate D-ribonucleotide production. Dephosphorylation regenerates the low-affinity form of the enzyme, leading to product release.

The catalysed reaction is nicotinate + 5-phospho-alpha-D-ribose 1-diphosphate + ATP + H2O = nicotinate beta-D-ribonucleotide + ADP + phosphate + diphosphate. Its pathway is cofactor biosynthesis; NAD(+) biosynthesis; nicotinate D-ribonucleotide from nicotinate: step 1/1. Its function is as follows. Catalyzes the synthesis of beta-nicotinate D-ribonucleotide from nicotinate and 5-phospho-D-ribose 1-phosphate at the expense of ATP. This is Nicotinate phosphoribosyltransferase from Neisseria gonorrhoeae (strain ATCC 700825 / FA 1090).